We begin with the raw amino-acid sequence, 229 residues long: Uracil-DNA glycosylase (229 aa).

The active-site Proton acceptor is the D70.

Belongs to the uracil-DNA glycosylase (UDG) superfamily. UNG family.

The protein resides in the cytoplasm. It catalyses the reaction Hydrolyzes single-stranded DNA or mismatched double-stranded DNA and polynucleotides, releasing free uracil.. Its function is as follows. Excises uracil residues from the DNA which can arise as a result of misincorporation of dUMP residues by DNA polymerase or due to deamination of cytosine. In Chlamydia felis (strain Fe/C-56) (Chlamydophila felis), this protein is Uracil-DNA glycosylase.